The following is a 252-amino-acid chain: 3-dehydroquinate dehydratase (252 aa).

Residues S21, 46-48 (EWR), and R82 contribute to the 3-dehydroquinate site. H143 serves as the catalytic Proton donor/acceptor. The Schiff-base intermediate with substrate role is filled by K170. The 3-dehydroquinate site is built by R213, S232, and Q236.

The protein belongs to the type-I 3-dehydroquinase family. In terms of assembly, homodimer.

The catalysed reaction is 3-dehydroquinate = 3-dehydroshikimate + H2O. It participates in metabolic intermediate biosynthesis; chorismate biosynthesis; chorismate from D-erythrose 4-phosphate and phosphoenolpyruvate: step 3/7. In terms of biological role, involved in the third step of the chorismate pathway, which leads to the biosynthesis of aromatic amino acids. Catalyzes the cis-dehydration of 3-dehydroquinate (DHQ) and introduces the first double bond of the aromatic ring to yield 3-dehydroshikimate. This is 3-dehydroquinate dehydratase from Escherichia coli O9:H4 (strain HS).